Here is a 649-residue protein sequence, read N- to C-terminus: Protein mitoshell (649 aa).

The span at 167-176 shows a compositional bias: basic and acidic residues; it reads LRSEARKPRP. Disordered regions lie at residues 167 to 193, 389 to 414, and 485 to 512; these read LRSEARKPRPESVVPEESSISSLESGA, HGPSAFSTPNNQIRNNAASKGQEPTS, and ALPSQEIPNAPTPKSSPQSDRPRDVRSY. Over residues 177 to 191 the composition is skewed to low complexity; the sequence is ESVVPEESSISSLES. Composition is skewed to polar residues over residues 393-414 and 485-503; these read AFSTPNNQIRNNAASKGQEPTS and ALPSQEIPNAPTPKSSPQS.

Its function is as follows. Required for male meiotic cytokinesis through its involvement in the regulation of mitochondrial aggregation and fusion, astral spindle assembly and contractile ring formation. This Drosophila melanogaster (Fruit fly) protein is Protein mitoshell.